A 32-amino-acid polypeptide reads, in one-letter code: Alcohol dehydrogenase-related 31 kDa protein (32 aa).

Tyrosine 11–alanine 32 is an NAD(+) binding site.

This sequence belongs to the short-chain dehydrogenases/reductases (SDR) family.

The protein is Alcohol dehydrogenase-related 31 kDa protein (Adhr) of Drosophila yakuba (Fruit fly).